A 291-amino-acid chain; its full sequence is MISMLNQQVELKPILKFQITQIYSHSLIQEIKALITRLVLQVWRRPATLMAGIIQPLLWLILFGGLFYNAPINLFTINTSYNCFLSSGIIIFTSFTGALNSGLPLMFDREFGFLNRLLTAPLVSRTSIILSSATFMTCISLIQVVFIVTASLFMGNSPLNSDSTMIFGLMILLVTVGVTMLSLALSFTLPGHIELLAFILVVNLPFLFSSTALAPLYFMPPWLQLIASLNPLSYAIEGTRYLYSSVNWNFTECVIKISWGDICLGQIIILLIALDIMAAYLVSNILKAKLN.

A run of 6 helical transmembrane segments spans residues 47–67 (ATLM…GGLF), 87–107 (SGII…PLMF), 135–155 (FMTC…LFMG), 165–185 (MIFG…SLAL), 195–215 (LLAF…ALAP), and 262–282 (ICLG…AYLV). The region spanning 47 to 289 (ATLMAGIIQP…YLVSNILKAK (243 aa)) is the ABC transmembrane type-2 domain.

It belongs to the ABC-2 integral membrane protein family.

Its subcellular location is the plastid. The protein localises to the chloroplast membrane. The protein is Putative transport permease ycf38 (ycf38) of Pyropia yezoensis (Susabi-nori).